A 203-amino-acid chain; its full sequence is Bone marrow stromal antigen 2 (203 aa).

The Cytoplasmic segment spans residues 1-26 (MAPTFYHYHPLPMDQKEPGCGIRWRC). A helical; Signal-anchor for type II membrane protein membrane pass occupies residues 27–47 (LAAASVLILVALVIPLIIFAV). The Extracellular segment spans residues 48-183 (KANSEACRDG…EASITSKQNS (136 aa)). Residues asparagine 66 and asparagine 93 are each glycosylated (N-linked (GlcNAc...) asparagine). Positions 66-178 (NTTRLLQRQL…LRTAEEASIT (113 aa)) form a coiled coil. Serine 183 carries GPI-anchor amidated serine lipidation. Positions 184–203 (AGSMAVSSLLVLAVPLFLLF) are cleaved as a propeptide — removed in mature form.

Parallel homodimer; disulfide-linked. May form homotetramers under reducing conditions. Isoform 1 and isoform 2 form homodimers and also heterodimers with each other. Dimerization is essential for its antiviral activity. Interacts (via cytoplasmic domain) with ARHGAP44. Interacts with MMP14 (via C-terminal cytoplasmic tail). Interacts with LILRA4/ILT7. Interacts with RNF115. The GPI anchor is essential for its antiviral activity.

The protein resides in the golgi apparatus. Its subcellular location is the trans-Golgi network. It is found in the cell membrane. The protein localises to the late endosome. It localises to the membrane raft. The protein resides in the cytoplasm. Its subcellular location is the apical cell membrane. Its function is as follows. IFN-induced antiviral host restriction factor which efficiently blocks the release of diverse mammalian enveloped viruses by directly tethering nascent virions to the membranes of infected cells. Acts as a direct physical tether, holding virions to the cell membrane and linking virions to each other. The tethered virions can be internalized by endocytosis and subsequently degraded or they can remain on the cell surface. In either case, their spread as cell-free virions is restricted. Its target viruses belong to diverse families, including retroviridae: human immunodeficiency virus type 1 (HIV-1), mouse mammary tumor virus (MMTV) and murine leukemia virus (MLV), filoviridae: ebola virus (EBOV), arenaviridae: lassa virus (LASV), and rhabdoviridae: vesicular stomatitis virus (VSV). Can inhibit cell surface proteolytic activity of MMP14 causing decreased activation of MMP15 which results in inhibition of cell growth and migration. Can stimulate signaling by LILRA4/ILT7 and consequently provide negative feedback to the production of IFN by plasmacytoid dendritic cells in response to viral infection. Plays a role in the organization of the subapical actin cytoskeleton in polarized epithelial cells. This chain is Bone marrow stromal antigen 2 (Bst2), found in Cricetulus griseus (Chinese hamster).